The primary structure comprises 157 residues: Endoribonuclease YbeY (157 aa).

3 residues coordinate Zn(2+): His-111, His-115, and His-121.

It belongs to the endoribonuclease YbeY family. It depends on Zn(2+) as a cofactor.

The protein resides in the cytoplasm. In terms of biological role, single strand-specific metallo-endoribonuclease involved in late-stage 70S ribosome quality control and in maturation of the 3' terminus of the 16S rRNA. The protein is Endoribonuclease YbeY of Pseudomonas putida (strain W619).